The sequence spans 236 residues: Bidirectional sugar transporter SWEET2 (236 aa).

Over 1-15 the chain is Extracellular; the sequence is MDVFAFNASLSMCKD. A glycan (N-linked (GlcNAc...) asparagine) is linked at N7. A helical transmembrane segment spans residues 16–36; sequence VAGIAGNIFAFGLFVSPMPTF. Residues 18-103 form the MtN3/slv 1 domain; sequence GIAGNIFAFG…ILFIMHTDKK (86 aa). Over 37–50 the chain is Cytoplasmic; the sequence is RRIMRNKSTEQFSG. A helical transmembrane segment spans residues 51 to 71; sequence LPYIYALLNCLICLWYGTPFI. Residues 72 to 76 lie on the Extracellular side of the membrane; sequence SHSNA. A helical membrane pass occupies residues 77-97; it reads MLMTVNSVGATFQLCYIILFI. At 98–108 the chain is on the cytoplasmic side; it reads MHTDKKNKMKM. The helical transmembrane segment at 109–129 threads the bilayer; that stretch reads LGLLFVVFAVVGVIVAGSLQI. At 130-137 the chain is on the extracellular side; that stretch reads PDQLTRWY. Residues 138–158 form a helical membrane-spanning segment; sequence FVGFLSCGSLVSMFASPLFVI. The MtN3/slv 2 domain maps to 138-221; that stretch reads FVGFLSCGSL…LALYCYYHRN (84 aa). The Cytoplasmic portion of the chain corresponds to 159 to 170; the sequence is NLVIRTKSVEFM. The helical transmembrane segment at 171–191 threads the bilayer; the sequence is PFYLSLSTFLMSASFLLYGLF. At 192 to 194 the chain is on the extracellular side; it reads NSD. A helical transmembrane segment spans residues 195 to 215; the sequence is AFVYTPNGIGTILGIVQLALY. Residues 216–236 are Cytoplasmic-facing; sequence CYYHRNSIEEETKEPLIVSYV.

It belongs to the SWEET sugar transporter family. Forms heterooligomers with SWEET17.

It is found in the cell membrane. In terms of biological role, mediates both low-affinity uptake and efflux of sugar across the plasma membrane. This Arabidopsis thaliana (Mouse-ear cress) protein is Bidirectional sugar transporter SWEET2.